A 192-amino-acid chain; its full sequence is MKLLEEFIQEKGTVLPGNVLKVDAFLNHQIDPVLMQAMGNEFAKRFQDLGITKIVTIESSGIAPAVFAGLALSVPVVFARKKKSVTLTDNLFTSTVYSYTKKESNDISVSKQFLTVDDTILVIDDFLANGQAALGLLEIAEHAGAKVAGIGIVIEKSFQQGRELLNKTGIPVYSLARIASLENEEILFLEEE.

2 residues coordinate xanthine: Leu20 and Asn27. 128–132 is a binding site for 5-phospho-alpha-D-ribose 1-diphosphate; sequence ANGQA. Lys156 contributes to the xanthine binding site.

It belongs to the purine/pyrimidine phosphoribosyltransferase family. Xpt subfamily. As to quaternary structure, homodimer.

The protein resides in the cytoplasm. It catalyses the reaction XMP + diphosphate = xanthine + 5-phospho-alpha-D-ribose 1-diphosphate. It participates in purine metabolism; XMP biosynthesis via salvage pathway; XMP from xanthine: step 1/1. In terms of biological role, converts the preformed base xanthine, a product of nucleic acid breakdown, to xanthosine 5'-monophosphate (XMP), so it can be reused for RNA or DNA synthesis. This is Xanthine phosphoribosyltransferase from Listeria monocytogenes serotype 4b (strain CLIP80459).